The following is a 458-amino-acid chain: Exodeoxyribonuclease 7 large subunit (458 aa).

Belongs to the XseA family. Heterooligomer composed of large and small subunits.

The protein resides in the cytoplasm. It carries out the reaction Exonucleolytic cleavage in either 5'- to 3'- or 3'- to 5'-direction to yield nucleoside 5'-phosphates.. In terms of biological role, bidirectionally degrades single-stranded DNA into large acid-insoluble oligonucleotides, which are then degraded further into small acid-soluble oligonucleotides. The chain is Exodeoxyribonuclease 7 large subunit from Escherichia coli (strain UTI89 / UPEC).